The following is a 328-amino-acid chain: Phenylalanine--tRNA ligase alpha subunit (328 aa).

Glu-245 contacts Mg(2+).

It belongs to the class-II aminoacyl-tRNA synthetase family. Phe-tRNA synthetase alpha subunit type 1 subfamily. In terms of assembly, tetramer of two alpha and two beta subunits. It depends on Mg(2+) as a cofactor.

It is found in the cytoplasm. It carries out the reaction tRNA(Phe) + L-phenylalanine + ATP = L-phenylalanyl-tRNA(Phe) + AMP + diphosphate + H(+). In Helicobacter pylori (strain HPAG1), this protein is Phenylalanine--tRNA ligase alpha subunit.